The sequence spans 328 residues: Small ribosomal subunit protein bS1A (328 aa).

S1 motif domains lie at 31–100, 118–182, and 196–264; these read GDIV…LSIR, DATV…LSHR, and AQVV…LSTK. The interval 298–328 is disordered; sequence EAQGIPYEPPTSVDDTDDEEDESLAVSAVDE. Residues 311 to 328 show a composition bias toward acidic residues; that stretch reads DDTDDEEDESLAVSAVDE.

Belongs to the bacterial ribosomal protein bS1 family.

Binds mRNA. The sequence is that of Small ribosomal subunit protein bS1A (rps1A) from Synechocystis sp. (strain ATCC 27184 / PCC 6803 / Kazusa).